The primary structure comprises 858 residues: ATP-dependent DNA helicase Q-like SIM (858 aa).

The UBA domain maps to 2–44; sequence DLSSDQLVMKIVEMGFEKLDALEAVKAVGGKSCDDAVEYILKG. The region spanning 177–353 is the Helicase ATP-binding domain; the sequence is LSTWVAHKDC…LESLHLSKET (177 aa). 190-197 contributes to the ATP binding site; it reads AATGSGKS. The DEAH box motif lies at 288-291; that stretch reads DEAH. Positions 402 to 450 are disordered; the sequence is LAVISRESEEQTDFGSHDSENIHETDYDEDEEDQENSLAKKNSSNGKEL. The span at 416-426 shows a compositional bias: basic and acidic residues; that stretch reads GSHDSENIHET. The segment covering 427–436 has biased composition (acidic residues); that stretch reads DYDEDEEDQE. Positions 437–448 are enriched in polar residues; sequence NSLAKKNSSNGK. Residues 491-627 form the Helicase C-terminal domain; the sequence is EKQKDLEGLT…QTEQAYKMLS (137 aa). Positions 822-858 are disordered; the sequence is RQRLERRERKPRRERKPRKKRTRGRSSTKLHPWRSKE. Residues 830-858 are compositionally biased toward basic residues; that stretch reads RKPRRERKPRKKRTRGRSSTKLHPWRSKE.

Belongs to the helicase family. RecQ subfamily. It depends on Mg(2+) as a cofactor. Requires Mn(2+) as cofactor. In terms of tissue distribution, mostly expressed in roots and seedlings, and, to a lower extent, in leaves, shoots, shoot apical mersitem, inflorescences, flowers, siliques and seeds.

Its subcellular location is the nucleus. The catalysed reaction is Couples ATP hydrolysis with the unwinding of duplex DNA by translocating in the 3'-5' direction.. It carries out the reaction ATP + H2O = ADP + phosphate + H(+). Its function is as follows. Plant specific, probable 3'-5' DNA helicase that may play a role in the repair of DNA. This is ATP-dependent DNA helicase Q-like SIM (RECQSIM) from Arabidopsis thaliana (Mouse-ear cress).